The sequence spans 150 residues: C-type lectin 37Db (150 aa).

A signal peptide spans 1 to 20; the sequence is MMVKLLLLFLVCWSALPLES. The C-type lectin domain maps to 31 to 148; that stretch reads IGEKQYYISL…CYSSVAFICQ (118 aa). Cystine bridges form between cysteine 52–cysteine 147 and cysteine 122–cysteine 139. N-linked (GlcNAc...) asparagine glycosylation is found at asparagine 107 and asparagine 115.

Its subcellular location is the secreted. Its function is as follows. Galactose-specific lectin that displays calcium-dependent activity. Binds to the surface of hemocytes and enhances hemocyte encapsulation and melanization. This is likely by interacting with carbohydrates on the surface of the hemocytes. Also displays agglutination activity against the Gram-negative bacterium E.coli. This chain is C-type lectin 37Db, found in Drosophila melanogaster (Fruit fly).